We begin with the raw amino-acid sequence, 527 residues long: MPLLSRSLRIIQNSPIRKVWNQVDTSPKHGICVPLFSIHTQNSCGIGEFLDLIPMIDWCTLCGFQILQILPINDTGSCSSPYNSISSISLNPLHLSISALPYKEEVSSSRKLIQEMQRLSQLSQVNYEKVIPMKRAFFKEYFRVCKSKNLTNHPDFCDFCEREKYWLHPYALFCSIREHLNYLPINHWSTTYTDLSYISQHEHTFAKDIEFYSYLQYLCFEQMKQVRKHADHKGCLIKGDIPILISKDSCDVWFYRKYFSSSESVGSPPDFYNAEGQNWNLPIYNMKTLRQDAYHWWKERLRYAENFYSLYRLDHVVGLFRFWVWDELGRGRFEPQDPKDYLDQGTDILSHLLKASSMLPIGEDLGTIPVDVKQALESLAVCGTRIPRWERDWEGTGAYIPFDQYNPLSVTSLSTHDSSTLALWWQEAPQEARLFAQFLGMPYTPSLSFHNHKEILKLSHKTSSIFHINLINDYLALCPDLISTNPLQERINLPGTISKNNWVYRVKPSIEQLSAHSKLNSLLASLF.

This sequence belongs to the disproportionating enzyme family.

The protein resides in the cytoplasm. It carries out the reaction Transfers a segment of a (1-&gt;4)-alpha-D-glucan to a new position in an acceptor, which may be glucose or a (1-&gt;4)-alpha-D-glucan.. This Chlamydia muridarum (strain MoPn / Nigg) protein is 4-alpha-glucanotransferase (malQ).